The primary structure comprises 335 residues: Nucleoid-associated protein YejK (335 aa).

It belongs to the YejK family.

The protein localises to the cytoplasm. The protein resides in the nucleoid. The protein is Nucleoid-associated protein YejK of Shigella dysenteriae serotype 1 (strain Sd197).